The primary structure comprises 255 residues: Protein BEAN1 (255 aa).

The helical transmembrane segment at 37–57 (VLVASAVIGVVITLSCITIIV) threads the bilayer. Residues 69-90 (QRHHHRHRRHHHHHRHRRRRHR) show a composition bias toward basic residues. 2 disordered regions span residues 69-109 (QRHH…MPYA) and 160-255 (DAPP…ERIV). A compositionally biased stretch (polar residues) spans 193–206 (QRTQGQSRLHTVSM). Residues 217-226 (GTGSPSDLLP) are compositionally biased toward low complexity. The span at 234–243 (PSNSQGSPIP) shows a compositional bias: polar residues. The span at 244 to 255 (TQAPMPSPERIV) shows a compositional bias: pro residues.

In terms of assembly, interacts with NEDD4.

It localises to the membrane. The protein is Protein BEAN1 (Bean1) of Mus musculus (Mouse).